A 380-amino-acid polypeptide reads, in one-letter code: Cytochrome b (380 aa).

4 helical membrane passes run 34–54 (FGSL…LLAM), 78–99 (WLIR…FLHI), 114–134 (WNTG…GYVL), and 179–199 (FFAL…IHLT). 2 residues coordinate heme b: His84 and His98. Residues His183 and His197 each contribute to the heme b site. His202 is an a ubiquinone binding site. 4 consecutive transmembrane segments (helical) span residues 227–247 (IKDI…ALFS), 289–309 (LGGV…PFLH), 321–341 (LSQT…WIGS), and 348–368 (FIII…ILFP).

It belongs to the cytochrome b family. In terms of assembly, the cytochrome bc1 complex contains 11 subunits: 3 respiratory subunits (MT-CYB, CYC1 and UQCRFS1), 2 core proteins (UQCRC1 and UQCRC2) and 6 low-molecular weight proteins (UQCRH/QCR6, UQCRB/QCR7, UQCRQ/QCR8, UQCR10/QCR9, UQCR11/QCR10 and a cleavage product of UQCRFS1). This cytochrome bc1 complex then forms a dimer. The cofactor is heme b.

The protein localises to the mitochondrion inner membrane. Its function is as follows. Component of the ubiquinol-cytochrome c reductase complex (complex III or cytochrome b-c1 complex) that is part of the mitochondrial respiratory chain. The b-c1 complex mediates electron transfer from ubiquinol to cytochrome c. Contributes to the generation of a proton gradient across the mitochondrial membrane that is then used for ATP synthesis. This is Cytochrome b (MT-CYB) from Alectoris rufa (Red-legged partridge).